The sequence spans 230 residues: MTEIKFCGMTRLSDALVAAENGANALGFIFYPRSPRYLPPEKARELIRRLPPEVIRVGVFVNEAVEKVKEIYHICGLDLVQLHGDENPDYCRRFPAPMLIRAVSPRNGADLAVLDRYSCRAFLLDRREGALYGGTGGISNWELGRRIRERFPLILAGGLNPENVMTAIENVLPHAVDINSGVESAPGIKDPEKIRAVLAAVRRYQGIRETEEERKEPERFRIFERTDEKI.

It belongs to the TrpF family.

It carries out the reaction N-(5-phospho-beta-D-ribosyl)anthranilate = 1-(2-carboxyphenylamino)-1-deoxy-D-ribulose 5-phosphate. It functions in the pathway amino-acid biosynthesis; L-tryptophan biosynthesis; L-tryptophan from chorismate: step 3/5. This Syntrophus aciditrophicus (strain SB) protein is N-(5'-phosphoribosyl)anthranilate isomerase.